The following is a 148-amino-acid chain: uncharacterized protein (148 aa).

The protein belongs to the serpin family. Poxviruses subfamily.

This is an uncharacterized protein from Fowlpox virus (strain NVSL) (FPV).